A 506-amino-acid chain; its full sequence is MRWITRPGWPGNLLALAAGGLTTLALAPFDFWPLVLVSVAMFYLGLRELSPRQALARGWCYGFGLYGAGTSWIYVSIHTYGGASALLAGLLMLLFIAAIALFFALPAWVWARWLRRNEAPLADSLAFAALWLWQEAFRGWFLTGFPWLYSGYSQLDAPLAGLAPVGGVWLISFALGLTAALLCNLHRLRARKSFLAMGVLLLLAPWVAGLALKDHAWTSPSGPPLKVAAMQGNIEQSMKWDPQKLNDQLALYRDMTFRSQQADLIVWPETAVPVLKESAEGYLSMMGKFAADRGAALITGVPVREPTGRGEYSYYNGITVTGQGDGTYFKQKLVPFGEYVPLQDLLRGLISFFDLPMSDFARGPNDQALLQAKGYHIAPFICYEVVYPEFAAGLSAQSDLLLTVSNDTWFGTSIGPLQHLQMAQMRALEAGRWMIRATNNGVTALIDPFGRITVQIPQFERGVLYGEVVPMHELTPYLHWRSWPLAIVCLLLFGWALLAARISKTV.

6 helical membrane passes run 24-44 (LALAPFDFWPLVLVSVAMFYL), 58-78 (GWCYGFGLYGAGTSWIYVSIH), 85-105 (ALLAGLLMLLFIAAIALFFAL), 125-145 (LAFAALWLWQEAFRGWFLTGF), 162-182 (LAPVGGVWLISFALGLTAALL), and 192-212 (KSFLAMGVLLLLAPWVAGLAL). Residues 230-470 (MQGNIEQSMK…RGVLYGEVVP (241 aa)) form the CN hydrolase domain. Glutamate 269 acts as the Proton acceptor in catalysis. Lysine 330 is a catalytic residue. Cysteine 382 functions as the Nucleophile in the catalytic mechanism. A helical membrane pass occupies residues 482 to 502 (SWPLAIVCLLLFGWALLAARI).

It belongs to the CN hydrolase family. Apolipoprotein N-acyltransferase subfamily.

It is found in the cell inner membrane. It carries out the reaction N-terminal S-1,2-diacyl-sn-glyceryl-L-cysteinyl-[lipoprotein] + a glycerophospholipid = N-acyl-S-1,2-diacyl-sn-glyceryl-L-cysteinyl-[lipoprotein] + a 2-acyl-sn-glycero-3-phospholipid + H(+). Its pathway is protein modification; lipoprotein biosynthesis (N-acyl transfer). Catalyzes the phospholipid dependent N-acylation of the N-terminal cysteine of apolipoprotein, the last step in lipoprotein maturation. In Pseudomonas syringae pv. tomato (strain ATCC BAA-871 / DC3000), this protein is Apolipoprotein N-acyltransferase.